The sequence spans 349 residues: Protein-glutamate methylesterase/protein-glutamine glutaminase 1 (349 aa).

A Response regulatory domain is found at 2-119 (RTLIVDDSAF…DVNKAEKELV (118 aa)). A 4-aspartylphosphate modification is found at aspartate 53. The CheB-type methylesterase domain maps to 158 to 345 (ILIGSSTGGP…EEIVKRLEAK (188 aa)). Catalysis depends on residues serine 163, histidine 190, and aspartate 287.

Belongs to the CheB family. In terms of processing, phosphorylated by CheA. Phosphorylation of the N-terminal regulatory domain activates the methylesterase activity.

It localises to the cytoplasm. The catalysed reaction is [protein]-L-glutamate 5-O-methyl ester + H2O = L-glutamyl-[protein] + methanol + H(+). It carries out the reaction L-glutaminyl-[protein] + H2O = L-glutamyl-[protein] + NH4(+). Involved in chemotaxis. Part of a chemotaxis signal transduction system that modulates chemotaxis in response to various stimuli. Catalyzes the demethylation of specific methylglutamate residues introduced into the chemoreceptors (methyl-accepting chemotaxis proteins or MCP) by CheR. Also mediates the irreversible deamidation of specific glutamine residues to glutamic acid. The sequence is that of Protein-glutamate methylesterase/protein-glutamine glutaminase 1 from Methanosarcina acetivorans (strain ATCC 35395 / DSM 2834 / JCM 12185 / C2A).